The primary structure comprises 92 residues: MNRLLQRQLFLENLLVGVNSTFHQMQKHSINTCCRSLQRILDHLILLQTIHSPAFRLDRMQLRQMQTLACLWIHRRNHDLQATLDVINWISP.

It belongs to the rotavirus A NSP6 family. As to quaternary structure, interacts with NSP2 and NSP5.

It localises to the host cytoplasm. The protein resides in the host mitochondrion. The polypeptide is Non-structural protein 6 (Rotavirus A (strain RVA/Human/Philippines/L26/1987/G12P1B[4]) (RV-A)).